The chain runs to 738 residues: Catalase-peroxidase (738 aa).

Basic and acidic residues predominate over residues methionine 1 to glutamate 16. The segment at methionine 1 to arginine 37 is disordered. The tryptophyl-tyrosyl-methioninium (Trp-Tyr) (with M-257) cross-link spans tryptophan 108 to tyrosine 231. Histidine 109 acts as the Proton acceptor in catalysis. Residues tyrosine 231–methionine 257 constitute a cross-link (tryptophyl-tyrosyl-methioninium (Tyr-Met) (with W-108)). Histidine 272 provides a ligand contact to heme b.

The protein belongs to the peroxidase family. Peroxidase/catalase subfamily. In terms of assembly, homodimer or homotetramer. Heme b is required as a cofactor. Formation of the three residue Trp-Tyr-Met cross-link is important for the catalase, but not the peroxidase activity of the enzyme.

It catalyses the reaction H2O2 + AH2 = A + 2 H2O. The enzyme catalyses 2 H2O2 = O2 + 2 H2O. Its function is as follows. Bifunctional enzyme with both catalase and broad-spectrum peroxidase activity. The protein is Catalase-peroxidase of Streptomyces ambofaciens.